Reading from the N-terminus, the 293-residue chain is Elongation factor Ts (293 aa).

Residues 80 to 83 are involved in Mg(2+) ion dislocation from EF-Tu; it reads TDFV.

Belongs to the EF-Ts family.

The protein resides in the cytoplasm. Functionally, associates with the EF-Tu.GDP complex and induces the exchange of GDP to GTP. It remains bound to the aminoacyl-tRNA.EF-Tu.GTP complex up to the GTP hydrolysis stage on the ribosome. This is Elongation factor Ts from Lacticaseibacillus casei (strain BL23) (Lactobacillus casei).